Consider the following 740-residue polypeptide: ATP-dependent RNA helicase DBP7 (740 aa).

A disordered region spans residues 1–104 (MSFNDDDDGM…SNVEQPARVT (104 aa)). The segment covering 13-25 (NFTTDVSDASETV) has biased composition (polar residues). The span at 43–60 (MMMEGRKPRVRGEKRPLE) shows a compositional bias: basic and acidic residues. The segment covering 72 to 81 (ASSSNSTSAQ) has biased composition (polar residues). The short motif at 149–178 (DTFDSFGITDTMVSHLNVKMKISKPTKIQK) is the Q motif element. The Helicase ATP-binding domain occupies 182–376 (PPFLQAQNDL…NVTLQNYKLI (195 aa)). 195–202 (AQTGSGKT) contacts ATP. The short motif at 311–314 (DEGD) is the DEAD box element. One can recognise a Helicase C-terminal domain in the interval 414 to 607 (TITQKHYKEG…VLRPAFEGLN (194 aa)). Residues 695–721 (SMGLQQGKAGAAAAASQKKPKEDSKSK) are disordered. A compositionally biased stretch (low complexity) spans 697–711 (GLQQGKAGAAAAASQ).

The protein belongs to the DEAD box helicase family. DDX31/DBP7 subfamily.

The protein localises to the nucleus. It is found in the nucleolus. The catalysed reaction is ATP + H2O = ADP + phosphate + H(+). In terms of biological role, ATP-binding RNA helicase involved in the biogenesis of 60S ribosomal subunits and is required for the normal formation of 25S and 5.8S rRNAs. The sequence is that of ATP-dependent RNA helicase DBP7 (DBP7) from Kluyveromyces lactis (strain ATCC 8585 / CBS 2359 / DSM 70799 / NBRC 1267 / NRRL Y-1140 / WM37) (Yeast).